A 60-amino-acid chain; its full sequence is Lantibiotic Pep5 (60 aa).

Residues 1-26 (MKNNKNLFDLEIKKETSQNTDELEPQ) constitute a propeptide that is removed on maturation. The disordered stretch occupies residues 1–29 (MKNNKNLFDLEIKKETSQNTDELEPQTAG). Threonine 27 carries the post-translational modification 2-oxobutanoic acid. The lanthionine (Ser-Cys) cross-link spans 35 to 39 (SVKQC). Residues threonine 42 and threonine 46 each carry the 2,3-didehydrobutyrine modification. The segment at residues 50–53 (TVSC) is a cross-link (beta-methyllanthionine (Thr-Cys)). The lanthionine (Ser-Cys) cross-link spans 52 to 59 (SCKGKNGC).

Belongs to the type A lantibiotic family. Maturation of lantibiotics involves the enzymatic conversion of Thr, and Ser into dehydrated AA and the formation of thioether bonds with cysteine. This is followed by membrane translocation and cleavage of the modified precursor. In terms of processing, after proteolysis of the propeptide, the N-terminal 2,3-didehydrobutyrine hydrolyzes to 2-oxobutanoic acid, possibly spontaneously.

Functionally, lanthionine-containing peptide antibiotic (lantibiotic) active on Gram-positive bacteria. The bactericidal activity of lantibiotics is based on depolarization of energized bacterial cytoplasmic membranes, initiated by the formation of aqueous transmembrane pores. In Staphylococcus epidermidis, this protein is Lantibiotic Pep5 (pepA).